The sequence spans 208 residues: Small ribosomal subunit protein uS2 (208 aa).

Residues 189–208 are disordered; the sequence is KPDQDLPVPPEEFETRLVQT.

This sequence belongs to the universal ribosomal protein uS2 family.

The protein is Small ribosomal subunit protein uS2 of Pyrobaculum arsenaticum (strain DSM 13514 / JCM 11321 / PZ6).